Reading from the N-terminus, the 493-residue chain is MEPLRAPALRRLLPPLLLLLLSLPPRARAKYVRGNLSSKEDWVFLTRFCFLSDYGRLDFRFRYPEAKCCQNILLYFDDPSQWPAVYKAGDKDCLAKESVIRPENNQVINLTTQYAWSGCQVVSEEGTRYLSCSSGRSFRSGDGLQLEYEMVLTNGKSFWTRHFSADEFGILETDVTFLLIFILIFFLSCYFGYLLKGRQLLHTTYKMFMAAAGVEVLSLLFFCIYWGQYATDGIGNESVKILAKLLFSSSFLIFLLMLILLGKGFTVTRGRISHAGSVKLSVYMTLYTLTHVVLLIYEAEFFDPGQVLYTYESPAGYGLIGLQVAAYVWFCYAVLVSLRHFPEKQPFYVPFFAAYTLWFFAVPVMALIANFGIPKWAREKIVNGIQLGIHLYAHGVFLIMTRPSAANKNFPYHVRTSQIASAGVPGPGGSQSADKAFPQHVYGNVTFISDSVPNFTELFSIPPPATSPLPRAAPDSGLPLFRDLRPPGPLRDL.

Residues 9 to 29 form a helical membrane-spanning segment; that stretch reads LRRLLPPLLLLLLSLPPRARA. A glycan (N-linked (GlcNAc...) asparagine) is linked at Asn-35. Transmembrane regions (helical) follow at residues 175-195, 207-227, 241-261, 282-302, 318-338, 349-369, and 381-401; these read VTFL…GYLL, MFMA…IYWG, ILAK…LILL, VYMT…AEFF, GLIG…LVSL, VPFF…ALIA, and IVNG…LIMT. Residue Asn-444 is glycosylated (N-linked (GlcNAc...) asparagine). Residues 464 to 493 form a disordered region; the sequence is PATSPLPRAAPDSGLPLFRDLRPPGPLRDL.

It localises to the membrane. The protein is Transmembrane protein 145 (TMEM145) of Homo sapiens (Human).